We begin with the raw amino-acid sequence, 127 residues long: Small ribosomal subunit protein uS11 (127 aa).

Belongs to the universal ribosomal protein uS11 family. As to quaternary structure, part of the 30S ribosomal subunit. Interacts with proteins S7 and S18. Binds to IF-3.

Located on the platform of the 30S subunit, it bridges several disparate RNA helices of the 16S rRNA. Forms part of the Shine-Dalgarno cleft in the 70S ribosome. In Flavobacterium psychrophilum (strain ATCC 49511 / DSM 21280 / CIP 103535 / JIP02/86), this protein is Small ribosomal subunit protein uS11.